A 206-amino-acid polypeptide reads, in one-letter code: Large ribosomal subunit protein uL4 (206 aa).

It belongs to the universal ribosomal protein uL4 family. In terms of assembly, part of the 50S ribosomal subunit.

One of the primary rRNA binding proteins, this protein initially binds near the 5'-end of the 23S rRNA. It is important during the early stages of 50S assembly. It makes multiple contacts with different domains of the 23S rRNA in the assembled 50S subunit and ribosome. Functionally, forms part of the polypeptide exit tunnel. The protein is Large ribosomal subunit protein uL4 of Rhodopseudomonas palustris (strain ATCC BAA-98 / CGA009).